The following is a 249-amino-acid chain: MSFTVIIPARYQSTRLPGKPLADICGKPMIQWVYEQASKAGADRVIIATDDSRIEAVVKGFGGDVCMTSPNHESGTERLAEVIDKCGIASNEIVVNVQGDEPLIPPSIIRQVAKNLADSIAPMATLAVTIDEEEDVFNPNAVKVVTDAEGYALYFSRAAIPWDRDAFAKGEALTANPLLRHIGIYAYRAGFINTYINWQPSVLEKIECLEQLRVLWYGEKIHVAVAKEAPAAGVDTQEDLDKVRAILAL.

It belongs to the KdsB family.

It localises to the cytoplasm. The catalysed reaction is 3-deoxy-alpha-D-manno-oct-2-ulosonate + CTP = CMP-3-deoxy-beta-D-manno-octulosonate + diphosphate. Its pathway is nucleotide-sugar biosynthesis; CMP-3-deoxy-D-manno-octulosonate biosynthesis; CMP-3-deoxy-D-manno-octulosonate from 3-deoxy-D-manno-octulosonate and CTP: step 1/1. The protein operates within bacterial outer membrane biogenesis; lipopolysaccharide biosynthesis. Its function is as follows. Activates KDO (a required 8-carbon sugar) for incorporation into bacterial lipopolysaccharide in Gram-negative bacteria. This is 3-deoxy-manno-octulosonate cytidylyltransferase from Aliivibrio salmonicida (strain LFI1238) (Vibrio salmonicida (strain LFI1238)).